Consider the following 146-residue polypeptide: Large ribosomal subunit protein uL13 (146 aa).

Belongs to the universal ribosomal protein uL13 family. Part of the 50S ribosomal subunit.

This protein is one of the early assembly proteins of the 50S ribosomal subunit, although it is not seen to bind rRNA by itself. It is important during the early stages of 50S assembly. In Methylobacillus flagellatus (strain ATCC 51484 / DSM 6875 / VKM B-1610 / KT), this protein is Large ribosomal subunit protein uL13.